The following is a 58-amino-acid chain: Small ribosomal subunit protein uS14 (58 aa).

Residues 1–21 (MSESETEQTGEHASHRTGQTH) form a disordered region. Positions 9–21 (TGEHASHRTGQTH) are enriched in basic and acidic residues. Cysteine 23, cysteine 26, cysteine 41, and cysteine 44 together coordinate Zn(2+).

This sequence belongs to the universal ribosomal protein uS14 family. Zinc-binding uS14 subfamily. In terms of assembly, part of the 30S ribosomal subunit. Requires Zn(2+) as cofactor.

Its function is as follows. Binds 16S rRNA, required for the assembly of 30S particles. This Haloquadratum walsbyi (strain DSM 16790 / HBSQ001) protein is Small ribosomal subunit protein uS14.